A 257-amino-acid chain; its full sequence is Pyridoxal phosphate homeostasis protein (257 aa).

An N6-(pyridoxal phosphate)lysine modification is found at K47.

This sequence belongs to the pyridoxal phosphate-binding protein YggS/PROSC family.

In terms of biological role, pyridoxal 5'-phosphate (PLP)-binding protein, which is involved in PLP homeostasis. This chain is Pyridoxal phosphate homeostasis protein, found in Mycobacterium leprae (strain TN).